A 367-amino-acid chain; its full sequence is Cyclin-dependent kinase 5 activator 2 (367 aa).

A compositionally biased stretch (polar residues) spans 1 to 11 (MGTVLSLSPAS). Disordered stretches follow at residues 1 to 56 (MGTV…RLKR), 72 to 98 (ASAK…LVQQ), 131 to 175 (AAAT…GSPR), and 329 to 367 (GEAA…NLDR). Glycine 2 carries N-myristoyl glycine lipidation. Residues 74 to 84 (AKKKKGSKKVT) are compositionally biased toward basic residues. At threonine 84 the chain carries Phosphothreonine. Low complexity predominate over residues 131–148 (AAATCEPPSGGSAAAQPP). Residues 154 to 171 (KPPPPPPPAPQVAPPVPG) are compositionally biased toward pro residues. The span at 342–357 (GAPAASSAARDSCAAG) shows a compositional bias: low complexity.

The protein belongs to the cyclin-dependent kinase 5 activator family. As to quaternary structure, heterodimer of a catalytic subunit and a regulatory subunit. Post-translationally, myristoylated. The Gly-2-Ala mutant is absent of the cell periphery, suggesting that a proper myristoylation signal is essential for the proper distribution of CDK5R2 (p39). In terms of tissue distribution, brain and neuron specific.

It is found in the cell membrane. Functionally, activator of CDK5/TPKII. This is Cyclin-dependent kinase 5 activator 2 (CDK5R2) from Homo sapiens (Human).